A 342-amino-acid chain; its full sequence is Pre-mRNA-splicing factor 18 (342 aa).

Methionine 1 is modified (N-acetylmethionine).

This sequence belongs to the PRP18 family. In terms of assembly, heterodimer with PPIH. Interacts with PRPF4 and with the spliceosome. Part of a complex containing U4/U6 snRNPs.

It is found in the nucleus speckle. Participates in the second step of pre-mRNA splicing. The chain is Pre-mRNA-splicing factor 18 (Prpf18) from Mus musculus (Mouse).